The primary structure comprises 182 residues: Large ribosomal subunit protein uL22 (182 aa).

Residues 155–182 (SGVDGAKQGKKKKKTDGVEKATTKRQKQ) form a disordered region.

This sequence belongs to the universal ribosomal protein uL22 family.

In Carabus granulatus (Ground beetle), this protein is Large ribosomal subunit protein uL22 (RpL17).